The primary structure comprises 331 residues: Photosystem II assembly lipoprotein Ycf48 (331 aa).

The N-terminal stretch at 1 to 23 (MIPVIRSFLSLLLCVGLTFGLGG) is a signal peptide. The N-palmitoyl cysteine moiety is linked to residue Cys-24. Cys-24 carries the S-diacylglycerol cysteine lipid modification.

This sequence belongs to the Ycf48 family. In terms of assembly, part of early PSII assembly complexes which includes D1 (psbA) and PsbI; not found in mature PSII. Binds to the lumenal side of PSII complexes. Interacts with YidC.

It localises to the cellular thylakoid membrane. Functionally, a factor required for optimal assembly of photosystem II (PSII), acting in the early stages of PSII assembly. Also plays a role in replacement of photodamaged D1 (psbA). Assists YidC in synthesis of chlorophyll-binding proteins. This Synechococcus sp. (strain RCC307) protein is Photosystem II assembly lipoprotein Ycf48.